A 907-amino-acid chain; its full sequence is Gamma-tubulin complex component 3 (907 aa).

Alanine 2 bears the N-acetylalanine mark. At serine 113 the chain carries Phosphoserine. Residues 210–230 (NQPSSQATTSKGVPSAVSRNM) show a composition bias toward polar residues. The tract at residues 210–241 (NQPSSQATTSKGVPSAVSRNMTRSRREGDTGG) is disordered.

The protein belongs to the TUBGCP family. Component of the gamma-tubulin ring complex (gTuRC) consisting of TUBGCP2, TUBGCP3, TUBGCP4, TUBGCP5 and TUBGCP6 and gamma-tubulin TUBG1 or TUBG2. TUBGCP2, TUBGCP3, TUBGCP4, TUBGCP5 and TUBGCP6 assemble in a 5:5:2:1:1 stoichiometry; each is associated with a gamma-tubulin, thereby arranging 14 gamma-tubulins in a helical manner. Gamma-tubulin at the first position is blocked by TUBGCP3 at the last position, allowing 13 protafilaments to grow into a microtubule. The gTuRC (via TUBGCP3 and TUBGCP6) interacts with ACTB and MZT1; the interactions form a luminal bridge that stabilizes the initial structure during complex assembly. The gTuRC (via TUBGCP2) interacts with MZT2A/MZT2B and CDK5RAP2 (via CM1 motif); the interactions play a role in gTuRC activation. Interacts with NIN (via N-terminus); the interaction may promote recruitment of the gamma-tubulin ring complex to the centrosome. In terms of tissue distribution, ubiquitously expressed.

The protein resides in the cytoplasm. It localises to the cytoskeleton. The protein localises to the microtubule organizing center. It is found in the centrosome. Component of the gamma-tubulin ring complex (gTuRC) which mediates microtubule nucleation. The gTuRC regulates the minus-end nucleation of alpha-beta tubulin heterodimers that grow into microtubule protafilaments, a critical step in centrosome duplication and spindle formation. The sequence is that of Gamma-tubulin complex component 3 (TUBGCP3) from Homo sapiens (Human).